The chain runs to 783 residues: Galactinol--sucrose galactosyltransferase (783 aa).

Belongs to the glycosyl hydrolases 36 family.

It carries out the reaction alpha-D-galactosyl-(1-&gt;3)-1D-myo-inositol + sucrose = raffinose + myo-inositol. With respect to regulation, inhibited by Ag(2)+, Hg(2+), Zn(2+), p-chloromercuribenzoate (pCMB) and 1-deoxygalactonojirimycin. Functionally, transglycosidase operating by a ping-pong reaction mechanism. Involved in the synthesis of raffinose, a major soluble carbohydrate in seeds, roots and tubers. Specific for galactinol and p-nitrophenyl-alpha-D-galactoside as galactosyl donors. Able to utilize sucrose, lactose, 4-beta-galactobiose, N-acetyl-D-lactosamine, trehalose and lacto-N-biose as acceptors. May also act as a glycoside hydrolase. The protein is Galactinol--sucrose galactosyltransferase (RFS) of Oryza sativa subsp. japonica (Rice).